We begin with the raw amino-acid sequence, 524 residues long: uncharacterized protein (524 aa).

The chain crosses the membrane as a helical span at residues 13–33; the sequence is EFILLILGMTVVGIVITMGLV.

The protein localises to the membrane. This is an uncharacterized protein from Methanocaldococcus jannaschii (strain ATCC 43067 / DSM 2661 / JAL-1 / JCM 10045 / NBRC 100440) (Methanococcus jannaschii).